The following is a 151-amino-acid chain: Large ribosomal subunit protein bL9 (151 aa).

This sequence belongs to the bacterial ribosomal protein bL9 family.

Its function is as follows. Binds to the 23S rRNA. This is Large ribosomal subunit protein bL9 from Chlorobium luteolum (strain DSM 273 / BCRC 81028 / 2530) (Pelodictyon luteolum).